A 182-amino-acid polypeptide reads, in one-letter code: Segregation and condensation protein B (182 aa).

The protein belongs to the ScpB family. Homodimer. Homodimerization may be required to stabilize the binding of ScpA to the Smc head domains. Component of a cohesin-like complex composed of ScpA, ScpB and the Smc homodimer, in which ScpA and ScpB bind to the head domain of Smc. The presence of the three proteins is required for the association of the complex with DNA.

It localises to the cytoplasm. Functionally, participates in chromosomal partition during cell division. May act via the formation of a condensin-like complex containing Smc and ScpA that pull DNA away from mid-cell into both cell halves. The protein is Segregation and condensation protein B of Staphylococcus saprophyticus subsp. saprophyticus (strain ATCC 15305 / DSM 20229 / NCIMB 8711 / NCTC 7292 / S-41).